The following is a 443-amino-acid chain: Glutamate--tRNA ligase 2 (443 aa).

Residues 7-17 (PSPTGYLHVGN) carry the 'HIGH' region motif. The short motif at 236–240 (KISKR) is the 'KMSKS' region element. Residue Lys-239 participates in ATP binding.

It belongs to the class-I aminoacyl-tRNA synthetase family. Glutamate--tRNA ligase type 1 subfamily. In terms of assembly, monomer.

The protein localises to the cytoplasm. It catalyses the reaction tRNA(Glu) + L-glutamate + ATP = L-glutamyl-tRNA(Glu) + AMP + diphosphate. In terms of biological role, catalyzes the attachment of glutamate to tRNA(Glu) in a two-step reaction: glutamate is first activated by ATP to form Glu-AMP and then transferred to the acceptor end of tRNA(Glu). The polypeptide is Glutamate--tRNA ligase 2 (Ehrlichia canis (strain Jake)).